The sequence spans 1071 residues: MSSHLSQDANMNGVYVRSDVSSMLSFDGSESRESMDDSKKGHQSLVEWLNETLPYLKLPWEASEDELRACLRDGTVLCSLLNQLSPGSMRMGGSFEPASVKIERFLTAMDEMALPRFEVSDIEQGDMVPVLQSLKALKASFSDGSYDKNSLAARRRWSLPEDHSDSRGDDRNFTDGFQSKEGSEIDMSDAKISDLLKSNSLRNAPTRSLFDMLDKLLDESMTKMNGHVSHAMASLLSALVQVIEQRISNQADNLKNQNILFRVREEKYRSRIKVLESLAAGTTKENEIVTNCMEHIKLEKTRIEEKERSEEKDVVRLRKEKERSDAEIRQLKQELKLVKETHENQCLELEAKAQKTRDELEKKLKDAELHVVDSSRKVKELEKLCQSKSQRWEKKECIYQNFIDNHSGALQELSATSLSIKHEVVRTQRKYFEDLNYYGLKLKGVADAAKNYHVVLEENRRLYNEVQELKGNIRVYCRIRPFLPGQNSRQTTIEYIGETGELVVANPFKQGKDTHRLFKFNKVFDQAATQEEVFLDTRPLIRSILDGYNVCIFAYGQTGSGKTYTMSGPSITSKEDWGVNYRALNDLFLLTQSRQNTVMYEVGVQMVEIYNEQVRDILSDGGSSRRLGIWNTALPNGLAVPDASMHCVRSTEDVLELMNIGLMNRTVGATALNERSSRSHCVLSVHVRGVDVETDSILRGSLHLVDLAGSERVDRSEATGERLKEAQHINKSLSALGDVIFALAHKNPHVPYRNSKLTQVLQSSLGGQAKTLMFVQVNPDGDSYAETVSTLKFAERVSGVELGAAKSSKEGRDVRQLMEQVSNLKDVIAKKDEELQNFQKVKGNNATSLKRGLSNLRLVGPTSPRRHSIGASPNARRGKASGLFGRGTSDVDNCSEYSSKHSDSGSQQSSDERKHQKDYHQPSKFAGAAKGIDFDDEDVELVGLADADSEDRLSDISDSCLSMGTETDGSISSAVELTLFPETAKPLELIERPEARMTSEKLEKSVKMGKTEPKDRTNIPSKIPKQTLKPPGQTRPSRLSIATSSSSKALTGAKRPTISTSSSAKPLNRRR.

The 104-residue stretch at 39–142 (KKGHQSLVEW…SLKALKASFS (104 aa)) folds into the Calponin-homology (CH) domain. A disordered region spans residues 157–181 (WSLPEDHSDSRGDDRNFTDGFQSKE). Positions 158 to 173 (SLPEDHSDSRGDDRNF) are enriched in basic and acidic residues. Positions 299 to 389 (EKTRIEEKER…ELEKLCQSKS (91 aa)) form a coiled coil. A Kinesin motor domain is found at 472 to 800 (NIRVYCRIRP…LKFAERVSGV (329 aa)). 556-563 (GQTGSGKT) is an ATP binding site. Positions 811–844 (GRDVRQLMEQVSNLKDVIAKKDEELQNFQKVKGN) form a coiled coil. Disordered stretches follow at residues 852–931 (GLSN…AAKG) and 995–1071 (ARMT…NRRR). Basic and acidic residues-rich tracts occupy residues 910–921 (SDERKHQKDYHQ) and 995–1017 (ARMTSEKLEKSVKMGKTEPKDRT). Over residues 1034–1049 (TRPSRLSIATSSSSKA) the composition is skewed to polar residues.

This sequence belongs to the TRAFAC class myosin-kinesin ATPase superfamily. Kinesin family. KIN-14 subfamily.

This Arabidopsis thaliana (Mouse-ear cress) protein is Kinesin-like protein KIN-14J.